The chain runs to 258 residues: Imidazole glycerol phosphate synthase subunit HisF (258 aa).

Active-site residues include Asp-11 and Asp-130.

This sequence belongs to the HisA/HisF family. As to quaternary structure, heterodimer of HisH and HisF.

The protein localises to the cytoplasm. It carries out the reaction 5-[(5-phospho-1-deoxy-D-ribulos-1-ylimino)methylamino]-1-(5-phospho-beta-D-ribosyl)imidazole-4-carboxamide + L-glutamine = D-erythro-1-(imidazol-4-yl)glycerol 3-phosphate + 5-amino-1-(5-phospho-beta-D-ribosyl)imidazole-4-carboxamide + L-glutamate + H(+). The protein operates within amino-acid biosynthesis; L-histidine biosynthesis; L-histidine from 5-phospho-alpha-D-ribose 1-diphosphate: step 5/9. In terms of biological role, IGPS catalyzes the conversion of PRFAR and glutamine to IGP, AICAR and glutamate. The HisF subunit catalyzes the cyclization activity that produces IGP and AICAR from PRFAR using the ammonia provided by the HisH subunit. This chain is Imidazole glycerol phosphate synthase subunit HisF, found in Klebsiella pneumoniae (strain 342).